The chain runs to 993 residues: Importin subunit beta-5 (993 aa).

Residues 24 to 100 enclose the Importin N-terminal domain; it reads AELGLRDLEK…RETLLHLLVS (77 aa).

It localises to the nucleus. In terms of biological role, required for nuclear protein import and mediates docking of import substrate to distinct nucleoporins. Serves a receptor for nuclear localization signals. Mediates the nuclear import of TATA-binding protein (TBP) and of histones H2A and H2B. This is Importin subunit beta-5 (kap114) from Schizosaccharomyces pombe (strain 972 / ATCC 24843) (Fission yeast).